The primary structure comprises 62 residues: Cytotoxin 11 (62 aa).

Intrachain disulfides connect C3-C22, C15-C40, C44-C55, and C56-C61.

This sequence belongs to the three-finger toxin family. Short-chain subfamily. Orphan group XV sub-subfamily. As to expression, expressed by the venom gland.

The protein resides in the secreted. It is found in the target cell membrane. Functionally, has low cytotoxic activity. The chain is Cytotoxin 11 from Naja annulifera (Banded Egyptian cobra).